The chain runs to 986 residues: Bifunctional glutamine synthetase adenylyltransferase/adenylyl-removing enzyme (986 aa).

The interval 1–482 (MVTTVISNVK…RYGRLFAGEE (482 aa)) is adenylyl removase. An adenylyl transferase region spans residues 486–986 (SRFGSLVFTG…RAAYEAVVKG (501 aa)).

The protein belongs to the GlnE family. The cofactor is Mg(2+).

The enzyme catalyses [glutamine synthetase]-O(4)-(5'-adenylyl)-L-tyrosine + phosphate = [glutamine synthetase]-L-tyrosine + ADP. It carries out the reaction [glutamine synthetase]-L-tyrosine + ATP = [glutamine synthetase]-O(4)-(5'-adenylyl)-L-tyrosine + diphosphate. In terms of biological role, involved in the regulation of glutamine synthetase GlnA, a key enzyme in the process to assimilate ammonia. When cellular nitrogen levels are high, the C-terminal adenylyl transferase (AT) inactivates GlnA by covalent transfer of an adenylyl group from ATP to specific tyrosine residue of GlnA, thus reducing its activity. Conversely, when nitrogen levels are low, the N-terminal adenylyl removase (AR) activates GlnA by removing the adenylyl group by phosphorolysis, increasing its activity. The regulatory region of GlnE binds the signal transduction protein PII (GlnB) which indicates the nitrogen status of the cell. This chain is Bifunctional glutamine synthetase adenylyltransferase/adenylyl-removing enzyme, found in Caulobacter vibrioides (strain ATCC 19089 / CIP 103742 / CB 15) (Caulobacter crescentus).